The primary structure comprises 254 residues: Ankyrin repeat domain-containing protein 7 (254 aa).

5 ANK repeats span residues 58-87, 91-120, 124-153, 157-186, and 190-219; these read KYRT…KINV, ENKS…DPDL, RYNT…DLEA, DGYT…DVNA, and YQRT…ELCY.

As to expression, testis specific.

This Homo sapiens (Human) protein is Ankyrin repeat domain-containing protein 7 (ANKRD7).